We begin with the raw amino-acid sequence, 458 residues long: Argininosuccinate lyase (458 aa).

Belongs to the lyase 1 family. Argininosuccinate lyase subfamily.

The protein localises to the cytoplasm. The catalysed reaction is 2-(N(omega)-L-arginino)succinate = fumarate + L-arginine. It functions in the pathway amino-acid biosynthesis; L-arginine biosynthesis; L-arginine from L-ornithine and carbamoyl phosphate: step 3/3. In Anoxybacillus flavithermus (strain DSM 21510 / WK1), this protein is Argininosuccinate lyase.